The sequence spans 240 residues: Myomodulin neuropeptides 2 (240 aa).

The signal sequence occupies residues 1 to 23; sequence MWKILETCSCFLVVAVLSGLGKA. The interval 23–44 is disordered; sequence AQPESFSGSAVTDDSTSGANKR. The propeptide occupies 24–44; that stretch reads QPESFSGSAVTDDSTSGANKR. The segment covering 26–41 has biased composition (polar residues); the sequence is ESFSGSAVTDDSTSGA. Residues Leu-51 and Leu-60 each carry the leucine amide modification. 2 consecutive propeptides (connecting peptide) follow at residues 72 to 81 and 84 to 112; these read SGHQVPMLRA and GSPD…RDQS. An Alanine amide modification is found at Ala-81. Residue Gln-115 is modified to Pyrrolidone carboxylic acid. Tyr-121 bears the Tyrosine amide mark. 10 propeptides (connecting peptide) span residues 124–147, 124–148, 124–149, 124–168, 131–168, 149–168, 150–168, 151–168, 171–190, and 171–199; these read DNNG…SNFD, DNNG…NFDL, DNNG…FDLL, DNNG…GGRY, DLLD…GGRY, LSSL…GGRY, SSLN…GGRY, SLNN…GGRY, SLPD…LVQS, and SLPD…PYSS. Ile-207 is modified (isoleucine amide). The propeptide occupies 210–219; it reads FSGSPRLQAK. A disordered region spans residues 212–240; that stretch reads GSPRLQAKAVPRPRIGRQESQMREAKSAE. An Isoleucine amide modification is found at Ile-226. Positions 227–240 are excised as a propeptide; sequence GRQESQMREAKSAE. The span at 227–240 shows a compositional bias: basic and acidic residues; sequence GRQESQMREAKSAE.

As to expression, expressed in the pedal-buccal projection neurons in the pedal ganglion.

Its subcellular location is the secreted. MMG2-DPs (Myomodulin gene 2-derived peptides) bias egestive feeding programs toward ingestive ones, and modulate accessory radula closer (ARC) muscle contractions. In Aplysia californica (California sea hare), this protein is Myomodulin neuropeptides 2 (MMG2).